Consider the following 769-residue polypeptide: MLSNRAFGETIEDYEVQHLLGKGGFATVYKARCLHTHQDVAIKMIDKKLIQGTGLTNRVRQEVEIHSRLKHPSVLQLYTFFQDANYVYLVLELAHNGELHRYMNHIARPFTETEAASILKQVVAGLLYLHSHNIMHRDISLSNLLLSREMHVKIADFGLATQLKRPDERHMTMCGTPNYISPEVVSRTSHGLPADVWSVGCMLYTLLVGRPPFETDAVQSTLNKVVMSEYIMPAHLSYEAQDLINKLLKKLPHERITLEAVLCHPFMLKCSNGGHSAPGALNVFSQSMESGDSGIITFASSDSRNSQQIRSVENSGPQQVLPQIREEFKQVHHKLPYEQTGLFGQASTGLAEPNWPGAAKSSAFCMEAGNVPNSKQASLKEDRISVPPLNTKRLLPTRYKTKNAIMSILRNGEVVLEFLKFRPTYNEDRINDICRISDDGQRIIIYQPDPGRGLPVREQPPDLQIPSGDCVYNYDNLPSKHWKKYIYGARFVGLVKSKTPKVTYFSTLGKCQLMETMTDFEIRFYSGAKLLKTPSEGLKVYDRNGMLLSDYSCSESRSLIEHGNECFTHCVNISNALEVAQTKDNSCFPVTIGRRPITDVQPAQRLDGLRDTTNIAFSTPKSNQGSINFSLSTISSTRNTSDFGTNCSRSNMLAAHQNIPIKRINVPEIGIATELSHGVVQVQFYDGSVVSVIPSMQGGGITYTQPNGTSTHFGKGDDLPFPVRDRVGQIPNIQLKLKTAPLLGSGRKTDYNNAMTPKTTTPYYNRMLL.

Residues 14-267 form the Protein kinase domain; the sequence is YEVQHLLGKG…LEAVLCHPFM (254 aa). ATP is bound by residues 20-28 and Lys-43; that span reads LGKGGFATV. Asp-138 acts as the Proton acceptor in catalysis. In terms of domain architecture, Cryptic POLO box 1 (CPB1) spans 381 to 498; it reads EDRISVPPLN…ARFVGLVKSK (118 aa). The Cryptic POLO box 2 (CPB2) domain occupies 499-602; the sequence is TPKVTYFSTL…GRRPITDVQP (104 aa). Residues 660-739 enclose the POLO box domain; it reads PIKRINVPEI…IPNIQLKLKT (80 aa).

This sequence belongs to the protein kinase superfamily. Ser/Thr protein kinase family. CDC5/Polo subfamily. As to quaternary structure, homodimer. Interacts with Alms1a. Ubiquitinated by the SCF-slmb ubiquitin ligase complex; leading to its degradation by the proteasome during interphase and regulating centriole number and ensuring the block to centriole reduplication. Expressed in testis (at protein level).

Its subcellular location is the cytoplasm. It is found in the cytoskeleton. The protein resides in the microtubule organizing center. The protein localises to the centrosome. It localises to the centriole. The enzyme catalyses L-seryl-[protein] + ATP = O-phospho-L-seryl-[protein] + ADP + H(+). It catalyses the reaction L-threonyl-[protein] + ATP = O-phospho-L-threonyl-[protein] + ADP + H(+). In terms of biological role, serine/threonine-protein kinase that plays a central role in centriole duplication. Able to trigger procentriole formation on the surface of the mother centriole cylinder, using mother centriole as a platform, leading to the recruitment of centriole biogenesis proteins such as Sas-6. When overexpressed, it is able to induce centrosome amplification through the simultaneous generation of multiple procentrioles adjoining each parental centriole during S phase. Centrosome amplification following overexpression can initiate tumorigenesis, highlighting the importance of centrosome regulation in cancers. The polypeptide is Serine/threonine-protein kinase PLK4 (SAK) (Drosophila melanogaster (Fruit fly)).